The following is a 480-amino-acid chain: Probable histone deacetylase 1-A (480 aa).

The interval 10-321 (KVCYYYDGDV…WTYETAVALD (312 aa)) is histone deacetylase. Histidine 141 is a catalytic residue. The segment at 388-480 (SIHDDSGEED…KRVKEETKSV (93 aa)) is disordered. Over residues 401–416 (PDKRISIRSSDKRIAC) the composition is skewed to basic and acidic residues. Positions 417 to 427 (DEEFSDSEDEG) are enriched in acidic residues. Basic and acidic residues predominate over residues 443 to 480 (VKTEEEKEGEDKKDVKEEEKAKDEKTDSKRVKEETKSV).

It belongs to the histone deacetylase family. HD type 1 subfamily. In terms of assembly, part of a large multiprotein complex that also contains RBBP4. In terms of tissue distribution, oocyte.

It is found in the nucleus. Its subcellular location is the cytoplasm. The enzyme catalyses N(6)-acetyl-L-lysyl-[histone] + H2O = L-lysyl-[histone] + acetate. It carries out the reaction N(6)-acetyl-L-lysyl-[protein] + H2O = L-lysyl-[protein] + acetate. It catalyses the reaction N(6)-(2E)-butenoyl-L-lysyl-[protein] + H2O = (2E)-2-butenoate + L-lysyl-[protein]. Its function is as follows. Histone deacetylase that catalyzes the deacetylation of lysine residues on the N-terminal part of the core histones (H2A, H2B, H3 and H4). Histone deacetylation gives a tag for epigenetic repression and plays an important role in transcriptional regulation, cell cycle progression and developmental events. Histone deacetylases act via the formation of large multiprotein complexes. Also functions as deacetylase for non-histone proteins. In addition to protein deacetylase activity, also has protein-lysine deacylase activity: acts as a protein decrotonylase by mediating decrotonylation ((2E)-butenoyl) of histones. The sequence is that of Probable histone deacetylase 1-A (hdac1-a) from Xenopus laevis (African clawed frog).